The primary structure comprises 82 residues: Small ribosomal subunit protein bS16 (82 aa).

This sequence belongs to the bacterial ribosomal protein bS16 family.

The polypeptide is Small ribosomal subunit protein bS16 (Tolumonas auensis (strain DSM 9187 / NBRC 110442 / TA 4)).